The chain runs to 291 residues: Bis(5'-nucleosyl)-tetraphosphatase, symmetrical (291 aa).

It belongs to the Ap4A hydrolase family.

The enzyme catalyses P(1),P(4)-bis(5'-adenosyl) tetraphosphate + H2O = 2 ADP + 2 H(+). Functionally, hydrolyzes diadenosine 5',5'''-P1,P4-tetraphosphate to yield ADP. The chain is Bis(5'-nucleosyl)-tetraphosphatase, symmetrical from Coxiella burnetii (strain RSA 331 / Henzerling II).